Reading from the N-terminus, the 510-residue chain is Probable allantoinase 2 (510 aa).

The Zn(2+) site is built by His97, His99, Lys185, His228, His287, and Asp360. The residue at position 185 (Lys185) is an N6-carboxylysine.

It belongs to the metallo-dependent hydrolases superfamily. Allantoinase family. Homotetramer. The cofactor is Zn(2+). In terms of processing, carboxylation allows a single lysine to coordinate two zinc ions.

The enzyme catalyses (S)-allantoin + H2O = allantoate + H(+). It functions in the pathway nitrogen metabolism; (S)-allantoin degradation; allantoate from (S)-allantoin: step 1/1. The protein is Probable allantoinase 2 (allB2) of Dictyostelium discoideum (Social amoeba).